We begin with the raw amino-acid sequence, 211 residues long: LexA repressor (211 aa).

A DNA-binding region (H-T-H motif) is located at residues 27 to 47 (QTEIARAFGFKGVRAVQHHLD). Residues Ser-131 and Lys-168 each act as for autocatalytic cleavage activity in the active site.

It belongs to the peptidase S24 family. Homodimer.

The catalysed reaction is Hydrolysis of Ala-|-Gly bond in repressor LexA.. Its function is as follows. Represses a number of genes involved in the response to DNA damage (SOS response), including recA and lexA. In the presence of single-stranded DNA, RecA interacts with LexA causing an autocatalytic cleavage which disrupts the DNA-binding part of LexA, leading to derepression of the SOS regulon and eventually DNA repair. The chain is LexA repressor from Xylella fastidiosa (strain M12).